The chain runs to 124 residues: uncharacterized protein (124 aa).

Disordered stretches follow at residues 1–26 and 100–124; these read MRRQEALVVTAGTASEASRDGEQPRP and IPGQQSRNCSLPQTKYYSRHGGLRR. Polar residues predominate over residues 102 to 115; the sequence is GQQSRNCSLPQTKY.

It is found in the cytoplasm. It localises to the cytoskeleton. Its subcellular location is the cilium basal body. This is an uncharacterized protein from Rattus norvegicus (Rat).